The sequence spans 215 residues: Thiamine-phosphate synthase (215 aa).

4-amino-2-methyl-5-(diphosphooxymethyl)pyrimidine contacts are provided by residues 37–41 (QLRIK) and asparagine 69. 2 residues coordinate Mg(2+): aspartate 70 and aspartate 89. Serine 108 serves as a coordination point for 4-amino-2-methyl-5-(diphosphooxymethyl)pyrimidine. A 2-[(2R,5Z)-2-carboxy-4-methylthiazol-5(2H)-ylidene]ethyl phosphate-binding site is contributed by 134–136 (TQT). Lysine 137 is a 4-amino-2-methyl-5-(diphosphooxymethyl)pyrimidine binding site. 2-[(2R,5Z)-2-carboxy-4-methylthiazol-5(2H)-ylidene]ethyl phosphate contacts are provided by residues glycine 166 and 186-187 (VS).

The protein belongs to the thiamine-phosphate synthase family. The cofactor is Mg(2+).

The catalysed reaction is 2-[(2R,5Z)-2-carboxy-4-methylthiazol-5(2H)-ylidene]ethyl phosphate + 4-amino-2-methyl-5-(diphosphooxymethyl)pyrimidine + 2 H(+) = thiamine phosphate + CO2 + diphosphate. It catalyses the reaction 2-(2-carboxy-4-methylthiazol-5-yl)ethyl phosphate + 4-amino-2-methyl-5-(diphosphooxymethyl)pyrimidine + 2 H(+) = thiamine phosphate + CO2 + diphosphate. It carries out the reaction 4-methyl-5-(2-phosphooxyethyl)-thiazole + 4-amino-2-methyl-5-(diphosphooxymethyl)pyrimidine + H(+) = thiamine phosphate + diphosphate. Its pathway is cofactor biosynthesis; thiamine diphosphate biosynthesis; thiamine phosphate from 4-amino-2-methyl-5-diphosphomethylpyrimidine and 4-methyl-5-(2-phosphoethyl)-thiazole: step 1/1. Condenses 4-methyl-5-(beta-hydroxyethyl)thiazole monophosphate (THZ-P) and 2-methyl-4-amino-5-hydroxymethyl pyrimidine pyrophosphate (HMP-PP) to form thiamine monophosphate (TMP). The polypeptide is Thiamine-phosphate synthase (Yersinia pestis (strain Pestoides F)).